We begin with the raw amino-acid sequence, 824 residues long: Type IV secretion system protein PtlC (824 aa).

456 to 463 is an ATP binding site; the sequence is GQSGSGKT.

The protein belongs to the TrbE/VirB4 family.

It is found in the cell membrane. Component of the type IV secretion system ptl essential for secretion of assembled pertussis toxin (PTX) through the outer membrane. The protein is Type IV secretion system protein PtlC (ptlC) of Bordetella pertussis (strain Tohama I / ATCC BAA-589 / NCTC 13251).